The sequence spans 163 residues: Putative defense protein 3 (163 aa).

An N-terminal signal peptide occupies residues Met-1–Ala-18. A Reelin domain is found at Tyr-19–Lys-163. Residues Cys-28 and Cys-103 are joined by a disulfide bond.

This sequence belongs to the insect defense protein family.

It is found in the secreted. In terms of biological role, may have antimicrobial activity. In Antheraea mylitta (Tasar silkworm), this protein is Putative defense protein 3.